Reading from the N-terminus, the 968-residue chain is uncharacterized protein (968 aa).

5 disordered regions span residues 124–177 (SSIS…FSFP), 348–437 (QEDS…VNDS), 572–595 (TTTTTITQQQQQQQQQQQQQQQNT), 608–627 (PKASNKLANNSNGKKVGSSK), and 837–877 (KASK…KKGK). Residues 131–157 (TIESNYLSNPSSPCQSTPILESSTPFS) are compositionally biased toward polar residues. Low complexity-rich tracts occupy residues 158–177 (QKLMSNEQQQQQQPQNFSFP), 352–431 (NNNN…NCNN), and 572–593 (TTTTTITQQQQQQQQQQQQQQQ). Residues 841-857 (DSSSSPTASSAAPGDSS) show a composition bias toward low complexity.

This is an uncharacterized protein from Dictyostelium discoideum (Social amoeba).